The chain runs to 124 residues: Autophagy-related protein 8 (124 aa).

Residue G116 is the site of Phosphatidylethanolamine amidated glycine attachment. The propeptide at 117 to 124 is removed in mature form; it reads GAGPLLEK.

This sequence belongs to the ATG8 family. In terms of assembly, conjugation to phosphatidylethanolamine (PE) leads to homodimerization. Interacts with ATG1, ATG3, ATG4, ATG7 and ATG12. In terms of processing, the C-terminal 8 residues of ATG8 are removed by ATG4 to expose Gly-116 at the C-terminus. This Gly-116 forms then a thioester bond with the 'Cys-550' of ATG7 (E1-like activating enzyme) before being transferred to the 'Cys-244' of ATG3 (the specific E2 conjugating enzyme), in order to be finally amidated with phosphatidylethanolamine. This lipid modification anchors ATG8 to membranes and can be reversed by ATG4, releasing soluble ATG8.

It localises to the cytoplasmic vesicle. The protein localises to the cvt vesicle membrane. It is found in the autophagosome membrane. The protein resides in the vacuole membrane. Its function is as follows. Ubiquitin-like modifier involved in cytoplasm to vacuole transport (Cvt) vesicles and autophagosome formation. With ATG4, mediates the delivery of the vesicles and autophagosomes to the vacuole via the microtubule cytoskeleton. Required for selective autophagic degradation of the nucleus (nucleophagy) as well as for mitophagy which contributes to regulate mitochondrial quantity and quality by eliminating the mitochondria to a basal level to fulfill cellular energy requirements and preventing excess ROS production. Also participates in membrane fusion events that take place in the early secretory pathway. Also involved in endoplasmic reticulum-specific autophagic process and is essential for the survival of cells subjected to severe ER stress. The ATG8-PE conjugate mediates tethering between adjacent membranes and stimulates membrane hemifusion, leading to expansion of the autophagosomal membrane during autophagy. Moreover not only conjugation, but also subsequent ATG8-PE deconjugation is an important step required to facilitate multiple events during macroautophagy, and especially for efficient autophagosome biogenesis, the assembly of ATG9-containing tubulovesicular clusters into phagophores/autophagosomes, and for the disassembly of PAS-associated ATG components. The sequence is that of Autophagy-related protein 8 from Kluyveromyces marxianus (strain DMKU3-1042 / BCC 29191 / NBRC 104275) (Yeast).